The primary structure comprises 699 residues: Sarcoplasmic reticulum histidine-rich calcium-binding protein (699 aa).

Positions 1-28 (MGHHRPWLHASVLWAGVASLLLPPAMTQ) are cleaved as a signal peptide. Positions 50-95 (SEEASAELRHHLHSPRDHPDENKDVSTENGHHFWSHPDREKEDEDV) are disordered. Residues 55-89 (AELRHHLHSPRDHPDENKDVSTENGHHFWSHPDRE) are compositionally biased toward basic and acidic residues. Thr-76 carries the phosphothreonine; by FAM20C modification. A run of 10 repeats spans residues 106-121 (HRSQ…VSGE), 134-154 (HRGH…HLPS), 155-177 (HRSH…HHHI), 180-213 (HGHR…GHQA), 214-237 (HRHR…HGPS), 238-270 (HRHQ…RHQA), 271-294 (HRHQ…RDPS), 295-318 (HRHR…GHQA), 319-342 (HRHQ…HVPD), and 343-365 (HRHQ…WHQG). Residues 106–342 (HRSQDHKVGD…SGEHHHHVPD (237 aa)) are 6 X approximate tandem repeats. Positions 106-365 (HRSQDHKVGD…DVSTERWHQG (260 aa)) are 4 X tandem repeats, acidic. Residues Ser-119 and Ser-145 each carry the phosphoserine; by FAM20C modification. Residues 127-617 (HGGQARGHRG…EDTGPQDAQE (491 aa)) are disordered. Basic residues-rich tracts occupy residues 148–158 (HRHHLPSHRSH) and 173–183 (HHHHILRHGHR). Positions 187–206 (GEDDEGEEEEEEEEEEEEAS) are enriched in acidic residues. Residues 231-241 (HHHHGPSHRHQ) show a composition bias toward basic residues. Over residues 244 to 263 (EEDDDDDDDDDDDDDDDDVS) the composition is skewed to acidic residues. Over residues 288 to 298 (HHHRDPSHRHR) the composition is skewed to basic residues. Acidic residues predominate over residues 302-311 (EDDNDDDDVS). The span at 324–335 (HRKEEVEAVSGE) shows a compositional bias: basic and acidic residues. Phosphoserine is present on Ser-333. Residues 336–347 (HHHHVPDHRHQG) are compositionally biased toward basic residues. A phosphoserine; by FAM20C mark is found at Ser-358 and Ser-431. 2 stretches are compositionally biased toward basic and acidic residues: residues 444–463 (SHQD…EMSH) and 470–481 (VVKDRSHLRKDD). Position 494 is a phosphoserine; by FAM20C (Ser-494). Residues 504–515 (QGEKGTHHGSRD) are compositionally biased toward basic and acidic residues. 2 stretches are compositionally biased toward acidic residues: residues 532 to 551 (QEEE…DEER) and 567 to 581 (SEEE…EEDE). Ser-567 carries the post-translational modification Phosphoserine; by FAM20C. The interval 627 to 673 (CGYCSFCNRCTECESCHCDEENMGEHCDQCQHCQFCYLCPLVCETVC) is metal-binding.

It belongs to the HRC family.

Its subcellular location is the sarcoplasmic reticulum lumen. May play a role in the regulation of calcium sequestration or release in the SR of skeletal and cardiac muscle. This is Sarcoplasmic reticulum histidine-rich calcium-binding protein (HRC) from Homo sapiens (Human).